Consider the following 214-residue polypeptide: uncharacterized protein (214 aa).

The signal sequence occupies residues 1 to 17; it reads MWCFIVFLTIFLPTLEG. N-linked (GlcNAc...) asparagine glycosylation is found at N88 and N139.

As to expression, component of the acid-insoluble organic matrix of calcified layers of the shell (at protein level).

It is found in the secreted. This is an uncharacterized protein from Lottia gigantea (Giant owl limpet).